A 164-amino-acid polypeptide reads, in one-letter code: Replication restart protein DnaT (164 aa).

This sequence belongs to the DnaT family. Homooligomerizes. Interacts with PriB. Component of the replication restart primosome. Primosome assembly occurs via a 'hand-off' mechanism. PriA binds to replication forks, subsequently PriB then DnaT bind; DnaT then displaces ssDNA to generate the helicase loading substrate.

Involved in the restart of stalled replication forks, which reloads the replicative helicase on sites other than the origin of replication. Can function in multiple replication restart pathways. Displaces ssDNA from a PriB-ssDNA complex. Probably forms a spiral filament on ssDNA. This chain is Replication restart protein DnaT, found in Buchnera aphidicola subsp. Acyrthosiphon pisum (strain 5A).